Consider the following 545-residue polypeptide: Chaperonin GroEL 1 (545 aa).

ATP-binding positions include 29-32 (TLGP), 86-90 (DGTTT), Gly-413, 479-481 (DAA), and Asp-495. The interval 525-545 (PEPKENNPAGSGAGMGGDFDY) is disordered. The segment covering 535–545 (SGAGMGGDFDY) has biased composition (gly residues).

The protein belongs to the chaperonin (HSP60) family. Forms a cylinder of 14 subunits composed of two heptameric rings stacked back-to-back. Interacts with the co-chaperonin GroES.

The protein resides in the cytoplasm. It carries out the reaction ATP + H2O + a folded polypeptide = ADP + phosphate + an unfolded polypeptide.. Its function is as follows. Together with its co-chaperonin GroES, plays an essential role in assisting protein folding. The GroEL-GroES system forms a nano-cage that allows encapsulation of the non-native substrate proteins and provides a physical environment optimized to promote and accelerate protein folding. The polypeptide is Chaperonin GroEL 1 (Thermosynechococcus vestitus (strain NIES-2133 / IAM M-273 / BP-1)).